We begin with the raw amino-acid sequence, 510 residues long: Probable allantoinase 2 (510 aa).

Zn(2+)-binding residues include His97, His99, Lys185, His228, His287, and Asp360. Lys185 carries the post-translational modification N6-carboxylysine.

This sequence belongs to the metallo-dependent hydrolases superfamily. Allantoinase family. In terms of assembly, homotetramer. The cofactor is Zn(2+). In terms of processing, carboxylation allows a single lysine to coordinate two zinc ions.

The enzyme catalyses (S)-allantoin + H2O = allantoate + H(+). It participates in nitrogen metabolism; (S)-allantoin degradation; allantoate from (S)-allantoin: step 1/1. The protein is Probable allantoinase 2 (allB2) of Dictyostelium discoideum (Social amoeba).